The chain runs to 673 residues: DNA ligase (673 aa).

Residues 32–36 (DAEYD), 81–82 (SL), and E113 each bind NAD(+). The active-site N6-AMP-lysine intermediate is the K115. 4 residues coordinate NAD(+): R136, E173, K290, and K314. C408, C411, C426, and C432 together coordinate Zn(2+). One can recognise a BRCT domain in the interval 595 to 673 (EIDSPFAGKT…EAEMIRLLGA (79 aa)).

This sequence belongs to the NAD-dependent DNA ligase family. LigA subfamily. Mg(2+) serves as cofactor. Mn(2+) is required as a cofactor.

It carries out the reaction NAD(+) + (deoxyribonucleotide)n-3'-hydroxyl + 5'-phospho-(deoxyribonucleotide)m = (deoxyribonucleotide)n+m + AMP + beta-nicotinamide D-nucleotide.. Functionally, DNA ligase that catalyzes the formation of phosphodiester linkages between 5'-phosphoryl and 3'-hydroxyl groups in double-stranded DNA using NAD as a coenzyme and as the energy source for the reaction. It is essential for DNA replication and repair of damaged DNA. The sequence is that of DNA ligase from Serratia proteamaculans (strain 568).